The chain runs to 293 residues: Ribonuclease HIII (293 aa).

The 216-residue stretch at 78 to 293 folds into the RNase H type-2 domain; that stretch reads LPLIGTDEVG…TEKAKKRLER (216 aa). A divalent metal cation contacts are provided by Asp84, Glu85, and Asp187.

It belongs to the RNase HII family. RnhC subfamily. Mn(2+) serves as cofactor. The cofactor is Mg(2+).

The protein resides in the cytoplasm. The catalysed reaction is Endonucleolytic cleavage to 5'-phosphomonoester.. Endonuclease that specifically degrades the RNA of RNA-DNA hybrids. This chain is Ribonuclease HIII, found in Streptococcus pneumoniae (strain Taiwan19F-14).